A 158-amino-acid chain; its full sequence is MFRIGQGFDVHQLVEGRPLIIGGVRIPYEKGLLGHSDADVLLHAVADACLGAIGAGDIGKHFPDTDECYKDADSALLLKQVWELVKQQGYELANLDCTIIAQKPKMAPHIEQMKENIANLLEGELSQVNVKATTTEKLGFTGREEGIAAQAVVLLQKK.

Residues Asp9 and His11 each coordinate a divalent metal cation. 4-CDP-2-C-methyl-D-erythritol 2-phosphate is bound by residues 9–11 (DVH) and 35–36 (HS). Position 43 (His43) interacts with a divalent metal cation. Residues 57–59 (DIG), 62–66 (FPDTD), 101–107 (AQKPKMA), 133–136 (TTTE), Phe140, and Arg143 contribute to the 4-CDP-2-C-methyl-D-erythritol 2-phosphate site.

This sequence belongs to the IspF family. In terms of assembly, homotrimer. A divalent metal cation is required as a cofactor.

It carries out the reaction 4-CDP-2-C-methyl-D-erythritol 2-phosphate = 2-C-methyl-D-erythritol 2,4-cyclic diphosphate + CMP. The protein operates within isoprenoid biosynthesis; isopentenyl diphosphate biosynthesis via DXP pathway; isopentenyl diphosphate from 1-deoxy-D-xylulose 5-phosphate: step 4/6. Functionally, involved in the biosynthesis of isopentenyl diphosphate (IPP) and dimethylallyl diphosphate (DMAPP), two major building blocks of isoprenoid compounds. Catalyzes the conversion of 4-diphosphocytidyl-2-C-methyl-D-erythritol 2-phosphate (CDP-ME2P) to 2-C-methyl-D-erythritol 2,4-cyclodiphosphate (ME-CPP) with a corresponding release of cytidine 5-monophosphate (CMP). This Geobacillus sp. (strain WCH70) protein is 2-C-methyl-D-erythritol 2,4-cyclodiphosphate synthase.